Reading from the N-terminus, the 325-residue chain is 1-aminocyclopropane-1-carboxylate oxidase 2 (325 aa).

Residues 157 to 257 (PTFGTKVSNY…RMSIASFYNP (101 aa)) form the Fe2OG dioxygenase domain. Fe cation contacts are provided by histidine 181, aspartate 183, and histidine 238.

This sequence belongs to the iron/ascorbate-dependent oxidoreductase family. Requires Fe cation as cofactor.

The catalysed reaction is 1-aminocyclopropane-1-carboxylate + L-ascorbate + O2 = ethene + L-dehydroascorbate + hydrogen cyanide + CO2 + 2 H2O. It participates in alkene biosynthesis; ethylene biosynthesis via S-adenosyl-L-methionine; ethylene from S-adenosyl-L-methionine: step 2/2. The polypeptide is 1-aminocyclopropane-1-carboxylate oxidase 2 (ACO2) (Doritaenopsis sp. (Moth orchid)).